Consider the following 231-residue polypeptide: 7-cyano-7-deazaguanine synthase (231 aa).

8–18 (FSGGQDSTTCL) is a binding site for ATP. 4 residues coordinate Zn(2+): Cys188, Cys197, Cys200, and Cys203.

This sequence belongs to the QueC family. The cofactor is Zn(2+).

The enzyme catalyses 7-carboxy-7-deazaguanine + NH4(+) + ATP = 7-cyano-7-deazaguanine + ADP + phosphate + H2O + H(+). It functions in the pathway purine metabolism; 7-cyano-7-deazaguanine biosynthesis. Its function is as follows. Catalyzes the ATP-dependent conversion of 7-carboxy-7-deazaguanine (CDG) to 7-cyano-7-deazaguanine (preQ(0)). This chain is 7-cyano-7-deazaguanine synthase, found in Escherichia coli (strain ATCC 8739 / DSM 1576 / NBRC 3972 / NCIMB 8545 / WDCM 00012 / Crooks).